Reading from the N-terminus, the 166-residue chain is MLPAYLPNPAAALFGGGTPIDGGRRWSDGRRLLGDGKTWRGLVLGILSGVLLGLIQVSVQDACVFVWLPRHTVLSVLLLAVGALAGDMVKSFVKRRIGKERGAAWPLADQYDLVAGSLLLLLIGDYGFAAVNLTIPVIFWILVLTPLLHRAVNLIGYAIGVKDVPW.

The next 4 helical transmembrane spans lie at 42 to 62 (LVLG…VQDA), 73 to 93 (VLSV…KSFV), 103 to 123 (AAWP…LLLI), and 128 to 148 (FAAV…TPLL).

It belongs to the CDP-archaeol synthase family. Mg(2+) serves as cofactor.

It localises to the cell membrane. The enzyme catalyses 2,3-bis-O-(geranylgeranyl)-sn-glycerol 1-phosphate + CTP + H(+) = CDP-2,3-bis-O-(geranylgeranyl)-sn-glycerol + diphosphate. It participates in membrane lipid metabolism; glycerophospholipid metabolism. In terms of biological role, catalyzes the formation of CDP-2,3-bis-(O-geranylgeranyl)-sn-glycerol (CDP-archaeol) from 2,3-bis-(O-geranylgeranyl)-sn-glycerol 1-phosphate (DGGGP) and CTP. This reaction is the third ether-bond-formation step in the biosynthesis of archaeal membrane lipids. This Methanosphaerula palustris (strain ATCC BAA-1556 / DSM 19958 / E1-9c) protein is CDP-archaeol synthase.